A 104-amino-acid polypeptide reads, in one-letter code: Protein ArtA (104 aa).

This chain is Protein ArtA (artA), found in Escherichia coli (strain K12).